A 693-amino-acid chain; its full sequence is Elongation factor G (693 aa).

Residues 8–282 (EKTRNIGIMA…AVVDYLPSPL (275 aa)) enclose the tr-type G domain. Residues 17–24 (AHVDAGKT), 81–85 (DTPGH), and 135–138 (NKMD) each bind GTP.

The protein belongs to the TRAFAC class translation factor GTPase superfamily. Classic translation factor GTPase family. EF-G/EF-2 subfamily.

The protein resides in the cytoplasm. Its function is as follows. Catalyzes the GTP-dependent ribosomal translocation step during translation elongation. During this step, the ribosome changes from the pre-translocational (PRE) to the post-translocational (POST) state as the newly formed A-site-bound peptidyl-tRNA and P-site-bound deacylated tRNA move to the P and E sites, respectively. Catalyzes the coordinated movement of the two tRNA molecules, the mRNA and conformational changes in the ribosome. This chain is Elongation factor G, found in Streptococcus mutans serotype c (strain ATCC 700610 / UA159).